A 224-amino-acid polypeptide reads, in one-letter code: 4-aminobenzoate synthase (224 aa).

Positions 77, 84, 138, 169, 173, and 176 each coordinate Fe(2+).

It belongs to the CADD family. Homodimer. Fe(2+) is required as a cofactor. Mn(2+) serves as cofactor.

Functionally, involved in de novo para-aminobenzoate (PABA) biosynthesis. Acts as a self-sacrificing or 'suicide' enzyme that utilizes its own active site tyrosine residue(s) as the substrate for PABA synthesis. The side chain of the tyrosine residue is released from the protein backbone via cleavage of the C(alpha)-C(beta) bond, leaving a glycine in place of the original tyrosine residue. Reaction requires O(2) and a reduced dimetal cofactor. The polypeptide is 4-aminobenzoate synthase (Chlamydia pneumoniae (Chlamydophila pneumoniae)).